Here is a 252-residue protein sequence, read N- to C-terminus: Pyridoxine 5'-phosphate synthase (252 aa).

Asparagine 12 contributes to the 3-amino-2-oxopropyl phosphate binding site. 14 to 15 is a 1-deoxy-D-xylulose 5-phosphate binding site; sequence DH. Residue arginine 23 coordinates 3-amino-2-oxopropyl phosphate. The active-site Proton acceptor is the histidine 48. The 1-deoxy-D-xylulose 5-phosphate site is built by arginine 50 and histidine 55. Catalysis depends on glutamate 75, which acts as the Proton acceptor. Residue threonine 105 participates in 1-deoxy-D-xylulose 5-phosphate binding. The Proton donor role is filled by histidine 199. Residues glycine 200 and 221-222 contribute to the 3-amino-2-oxopropyl phosphate site; that span reads GH.

The protein belongs to the PNP synthase family. Homooctamer; tetramer of dimers.

Its subcellular location is the cytoplasm. It carries out the reaction 3-amino-2-oxopropyl phosphate + 1-deoxy-D-xylulose 5-phosphate = pyridoxine 5'-phosphate + phosphate + 2 H2O + H(+). It participates in cofactor biosynthesis; pyridoxine 5'-phosphate biosynthesis; pyridoxine 5'-phosphate from D-erythrose 4-phosphate: step 5/5. Functionally, catalyzes the complicated ring closure reaction between the two acyclic compounds 1-deoxy-D-xylulose-5-phosphate (DXP) and 3-amino-2-oxopropyl phosphate (1-amino-acetone-3-phosphate or AAP) to form pyridoxine 5'-phosphate (PNP) and inorganic phosphate. This chain is Pyridoxine 5'-phosphate synthase, found in Cereibacter sphaeroides (strain ATCC 17029 / ATH 2.4.9) (Rhodobacter sphaeroides).